The chain runs to 505 residues: Cholesteryl ester transfer protein (505 aa).

A signal peptide spans 1-24 (MLWAGGMRLGMARILLMLVHAAAA). Asn-68 and Asn-114 each carry an N-linked (GlcNAc...) asparagine glycan. A disulfide bond links Cys-169 and Cys-210. 3 N-linked (GlcNAc...) asparagine glycosylation sites follow: Asn-266, Asn-344, and Asn-422.

Belongs to the BPI/LBP/Plunc superfamily. BPI/LBP family. Highly expressed in liver brain, heart, and spleen. Secreted in plasma.

Its subcellular location is the secreted. It carries out the reaction cholesteryl (9Z-octadecenoate)(in) = cholesteryl (9Z-octadecenoate)(out). The enzyme catalyses 1,2,3-tri-(9Z-octadecenoyl)-glycerol(in) = 1,2,3-tri-(9Z-octadecenoyl)-glycerol(out). It catalyses the reaction cholesteryl (9Z,12Z)-octadecadienoate(in) = cholesteryl (9Z,12Z)-octadecadienoate(out). Involved in the transfer of neutral lipids, including cholesteryl ester and triglyceride, among lipoprotein particles. Allows the net movement of cholesteryl ester from high density lipoproteins/HDL to triglyceride-rich very low density lipoproteins/VLDL, and the equimolar transport of triglyceride from VLDL to HDL. Regulates the reverse cholesterol transport, by which excess cholesterol is removed from peripheral tissues and returned to the liver for elimination. This is Cholesteryl ester transfer protein from Gallus gallus (Chicken).